The following is a 212-amino-acid chain: FMN-dependent NAD(P)H:quinone oxidoreductase 1 (212 aa).

FMN contacts are provided by residues S10, 16-18 (SQS), and 97-100 (MYNF). 2 residues coordinate substrate: N99 and Y131. FMN-binding positions include 145-148 (SRGG) and E187. Position 188 (E188) interacts with substrate.

Belongs to the azoreductase type 1 family. Homodimer. Homotetramer formed by a dimer of dimers when the ionic strength is high. FMN is required as a cofactor.

The catalysed reaction is 2 a quinone + NADPH + H(+) = 2 a 1,4-benzosemiquinone + NADP(+). It carries out the reaction 2 a quinone + NADH + H(+) = 2 a 1,4-benzosemiquinone + NAD(+). The enzyme catalyses N,N-dimethyl-1,4-phenylenediamine + anthranilate + 2 NAD(+) = 2-(4-dimethylaminophenyl)diazenylbenzoate + 2 NADH + 2 H(+). With respect to regulation, azoreductase activity increases with salt strength. In terms of biological role, quinone reductase that provides resistance to thiol-specific stress caused by electrophilic quinones. Shows a preference for benzoquinones. Its function is as follows. Also exhibits azoreductase activity. Catalyzes the reductive cleavage of the azo bond in aromatic azo compounds to the corresponding amines. NADPH is the preferred electron donor for azoreductase activity, but it can also use NADH. Can reduce different classes of azo dyes, including the common azo dyes methyl red and p-aminoazobenzene sulfonamide (PAABSA). Can activate several azo pro-drugs used in the treatment of inflammatory bowel disease (IBD), including balsalazide, sulfasalazine and olsalazine. Also acts as a nitrodeductase, and can reduce and hence activate the nitroaromatic drug nitrofurazone, a broad spectrum antibiotic. The protein is FMN-dependent NAD(P)H:quinone oxidoreductase 1 of Pseudomonas aeruginosa (strain ATCC 15692 / DSM 22644 / CIP 104116 / JCM 14847 / LMG 12228 / 1C / PRS 101 / PAO1).